Here is a 246-residue protein sequence, read N- to C-terminus: Sugar fermentation stimulation protein homolog (246 aa).

This sequence belongs to the SfsA family.

The polypeptide is Sugar fermentation stimulation protein homolog (Prochlorococcus marinus (strain MIT 9312)).